Consider the following 352-residue polypeptide: Putative [LysW]-L-2-aminoadipate/[LysW]-L-glutamate phosphate reductase (352 aa).

NADP(+) contacts are provided by residues 10-13 (SGFT) and 34-36 (SRR). C151 is a catalytic residue. N319 is an NADP(+) binding site.

The protein belongs to the NAGSA dehydrogenase family. Type 1 subfamily. LysY sub-subfamily.

It localises to the cytoplasm. It carries out the reaction [amino-group carrier protein]-C-terminal-N-(1-carboxy-5-oxopentan-1-yl)-L-glutamine + phosphate + NADP(+) = [amino-group carrier protein]-C-terminal-N-(1-carboxy-5-phosphooxy-5-oxopentan-1-yl)-L-glutamine + NADPH + H(+). The enzyme catalyses [amino-group carrier protein]-C-terminal-gamma-(L-glutamyl-5-semialdehyde)-L-glutamate + phosphate + NADP(+) = [amino-group carrier protein]-C-terminal-gamma-(5-phospho-L-glutamyl)-L-glutamate + NADPH + H(+). It participates in amino-acid biosynthesis; L-lysine biosynthesis via AAA pathway; L-lysine from L-alpha-aminoadipate (Thermus route): step 3/5. The protein operates within amino-acid biosynthesis; L-arginine biosynthesis. Functionally, involved in both the arginine and lysine biosynthetic pathways. The sequence is that of Putative [LysW]-L-2-aminoadipate/[LysW]-L-glutamate phosphate reductase from Pyrobaculum islandicum (strain DSM 4184 / JCM 9189 / GEO3).